Here is a 389-residue protein sequence, read N- to C-terminus: Nicotinate phosphoribosyltransferase (389 aa).

Residue histidine 216 is modified to Phosphohistidine; by autocatalysis.

Belongs to the NAPRTase family. In terms of processing, transiently phosphorylated on a His residue during the reaction cycle. Phosphorylation strongly increases the affinity for substrates and increases the rate of nicotinate D-ribonucleotide production. Dephosphorylation regenerates the low-affinity form of the enzyme, leading to product release.

The enzyme catalyses nicotinate + 5-phospho-alpha-D-ribose 1-diphosphate + ATP + H2O = nicotinate beta-D-ribonucleotide + ADP + phosphate + diphosphate. It participates in cofactor biosynthesis; NAD(+) biosynthesis; nicotinate D-ribonucleotide from nicotinate: step 1/1. In terms of biological role, catalyzes the synthesis of beta-nicotinate D-ribonucleotide from nicotinate and 5-phospho-D-ribose 1-phosphate at the expense of ATP. The chain is Nicotinate phosphoribosyltransferase from Ralstonia nicotianae (strain ATCC BAA-1114 / GMI1000) (Ralstonia solanacearum).